Reading from the N-terminus, the 581-residue chain is Threonine--tRNA ligase (581 aa).

Residues 185–478 are catalytic; the sequence is DHRKLGKELD…LIEHYGGAFP (294 aa). Residues C278, H329, and H455 each coordinate Zn(2+).

It belongs to the class-II aminoacyl-tRNA synthetase family. Homodimer. It depends on Zn(2+) as a cofactor.

Its subcellular location is the cytoplasm. The catalysed reaction is tRNA(Thr) + L-threonine + ATP = L-threonyl-tRNA(Thr) + AMP + diphosphate + H(+). In terms of biological role, catalyzes the attachment of threonine to tRNA(Thr) in a two-step reaction: L-threonine is first activated by ATP to form Thr-AMP and then transferred to the acceptor end of tRNA(Thr). Also edits incorrectly charged L-seryl-tRNA(Thr). The sequence is that of Threonine--tRNA ligase from Borreliella afzelii (strain PKo) (Borrelia afzelii).